The chain runs to 242 residues: Probable transcriptional regulatory protein Bcen2424_2294 (242 aa).

This sequence belongs to the TACO1 family.

The protein resides in the cytoplasm. The polypeptide is Probable transcriptional regulatory protein Bcen2424_2294 (Burkholderia cenocepacia (strain HI2424)).